We begin with the raw amino-acid sequence, 194 residues long: Ribosomal RNA large subunit methyltransferase E (194 aa).

Residues Gly-48, Trp-50, Asp-66, Asn-82, and Asp-110 each contribute to the S-adenosyl-L-methionine site. The active-site Proton acceptor is the Lys-150.

The protein belongs to the class I-like SAM-binding methyltransferase superfamily. RNA methyltransferase RlmE family.

The protein resides in the cytoplasm. The enzyme catalyses uridine(2552) in 23S rRNA + S-adenosyl-L-methionine = 2'-O-methyluridine(2552) in 23S rRNA + S-adenosyl-L-homocysteine + H(+). Specifically methylates the uridine in position 2552 of 23S rRNA at the 2'-O position of the ribose in the fully assembled 50S ribosomal subunit. The protein is Ribosomal RNA large subunit methyltransferase E of Picrophilus torridus (strain ATCC 700027 / DSM 9790 / JCM 10055 / NBRC 100828 / KAW 2/3).